A 210-amino-acid chain; its full sequence is Ribulose-phosphate 3-epimerase (210 aa).

Ser-9 is a substrate binding site. His-34, Asp-36, and His-68 together coordinate a divalent metal cation. Asp-36 acts as the Proton acceptor in catalysis. Substrate-binding positions include His-68, 144–147 (GFGG), 177–179 (DGG), and 199–200 (GS). Residue Asp-177 coordinates a divalent metal cation. Residue Asp-177 is the Proton donor of the active site.

Belongs to the ribulose-phosphate 3-epimerase family. A divalent metal cation is required as a cofactor.

It catalyses the reaction D-ribulose 5-phosphate = D-xylulose 5-phosphate. The protein operates within carbohydrate degradation. In terms of biological role, catalyzes the reversible epimerization of D-ribulose 5-phosphate to D-xylulose 5-phosphate. In Serratia marcescens, this protein is Ribulose-phosphate 3-epimerase.